The following is a 689-amino-acid chain: DNA topoisomerase 1 (689 aa).

The 111-residue stretch at 3 to 113 (DNLVIVESPA…KENRVVFNEI (111 aa)) folds into the Toprim domain. 2 residues coordinate Mg(2+): Glu-9 and Asp-82. A Topo IA-type catalytic domain is found at 129–557 (EMNLVDAQQA…FFSSFKQDVE (429 aa)). The segment at 163–168 (SAGRVQ) is interaction with DNA. The O-(5'-phospho-DNA)-tyrosine intermediate role is filled by Tyr-298. The disordered stretch occupies residues 328 to 357 (SKRKASGKQGDQDAHEAIRPSSTMRTPDDM). 3 C4-type zinc fingers span residues 577 to 603 (CEVC…FPDC), 617 to 645 (CPKC…YPEC), and 658 to 681 (CPKC…CSNC).

Belongs to the type IA topoisomerase family. Monomer. Mg(2+) serves as cofactor.

The enzyme catalyses ATP-independent breakage of single-stranded DNA, followed by passage and rejoining.. Its function is as follows. Releases the supercoiling and torsional tension of DNA, which is introduced during the DNA replication and transcription, by transiently cleaving and rejoining one strand of the DNA duplex. Introduces a single-strand break via transesterification at a target site in duplex DNA. The scissile phosphodiester is attacked by the catalytic tyrosine of the enzyme, resulting in the formation of a DNA-(5'-phosphotyrosyl)-enzyme intermediate and the expulsion of a 3'-OH DNA strand. The free DNA strand then undergoes passage around the unbroken strand, thus removing DNA supercoils. Finally, in the religation step, the DNA 3'-OH attacks the covalent intermediate to expel the active-site tyrosine and restore the DNA phosphodiester backbone. The sequence is that of DNA topoisomerase 1 from Staphylococcus aureus (strain bovine RF122 / ET3-1).